A 543-amino-acid chain; its full sequence is Cytochrome P450 52A1 (543 aa).

The Lumenal portion of the chain corresponds to 1–28; that stretch reads MSSSPSIAQEFLATITPYVEYCQENYTK. The chain crosses the membrane as a helical span at residues 29–48; that stretch reads WYYFIPLVILSLNLISMLHT. At 49–543 the chain is on the cytoplasmic side; the sequence is KYLERKFKAK…GAEVQMYLIL (495 aa). C487 is a binding site for heme.

The protein belongs to the cytochrome P450 family. It depends on heme as a cofactor.

It localises to the endoplasmic reticulum membrane. Together with an NADPH cytochrome P450 the enzyme system catalyzes the terminal hydroxylation as the first step in the assimilation of alkanes and fatty acids. The protein is Cytochrome P450 52A1 (CYP52A1) of Candida tropicalis (Yeast).